A 240-amino-acid polypeptide reads, in one-letter code: Probable transcriptional regulatory protein SO_3401 (240 aa).

This sequence belongs to the TACO1 family.

The protein resides in the cytoplasm. In Shewanella oneidensis (strain ATCC 700550 / JCM 31522 / CIP 106686 / LMG 19005 / NCIMB 14063 / MR-1), this protein is Probable transcriptional regulatory protein SO_3401.